The following is a 455-amino-acid chain: 3-isopropylmalate dehydratase large subunit (455 aa).

The [4Fe-4S] cluster site is built by C336, C396, and C399.

It belongs to the aconitase/IPM isomerase family. LeuC type 1 subfamily. Heterodimer of LeuC and LeuD. [4Fe-4S] cluster serves as cofactor.

The catalysed reaction is (2R,3S)-3-isopropylmalate = (2S)-2-isopropylmalate. The protein operates within amino-acid biosynthesis; L-leucine biosynthesis; L-leucine from 3-methyl-2-oxobutanoate: step 2/4. Functionally, catalyzes the isomerization between 2-isopropylmalate and 3-isopropylmalate, via the formation of 2-isopropylmaleate. This chain is 3-isopropylmalate dehydratase large subunit, found in Staphylococcus aureus (strain MRSA252).